A 376-amino-acid polypeptide reads, in one-letter code: MWVRTTLRIERWTKEKTEDDTSSWDESSTDINRLPSWGRGHLLASVESSTDASTLSSEGEFKNTDRCCWKHKCAGHIVRPFSPDCVHHDVHLHSLSHCDCDSRLKDCSEKTNSSSGDVGPTCSRDVDSTCFDIIQSPCFELIPEEECVERFWYGWCKSYRPVSVAVIHHPIHHECGADDLNQEEEEEEEEESKPPIPTQVGPTPTDSPTDTGMSMITGAPDSAAPITIWRSESPTGKSQGNRVIKKIKKKKEKDKEEETDEKEKAKVKKKVKKGKLMKKKSPVKSESPPDLSRSLSPRELARMSESSPDSRQDLESEDSYNDPGREEPSSEDIVESSSPRKREKNGVQVKKPGLKTSPVKKINKRRSPPASNPNLS.

A compositionally biased stretch (acidic residues) spans 180–191 (LNQEEEEEEEEE). The interval 180–376 (LNQEEEEEEE…SPPASNPNLS (197 aa)) is disordered. Low complexity predominate over residues 202 to 211 (PTPTDSPTDT). The segment covering 230-241 (RSESPTGKSQGN) has biased composition (polar residues). A compositionally biased stretch (basic residues) spans 243–252 (VIKKIKKKKE). Over residues 253 to 264 (KDKEEETDEKEK) the composition is skewed to basic and acidic residues. Residues 265-282 (AKVKKKVKKGKLMKKKSP) are compositionally biased toward basic residues. The span at 284–298 (KSESPPDLSRSLSPR) shows a compositional bias: low complexity. A phosphoserine mark is found at S319, S329, S330, S367, and S376.

The protein belongs to the PROCA1 family.

This is Protein PROCA1 (PROCA1) from Bos taurus (Bovine).